Here is a 198-residue protein sequence, read N- to C-terminus: Protein GrpE (198 aa).

The protein belongs to the GrpE family. In terms of assembly, homodimer.

The protein localises to the cytoplasm. In terms of biological role, participates actively in the response to hyperosmotic and heat shock by preventing the aggregation of stress-denatured proteins, in association with DnaK and GrpE. It is the nucleotide exchange factor for DnaK and may function as a thermosensor. Unfolded proteins bind initially to DnaJ; upon interaction with the DnaJ-bound protein, DnaK hydrolyzes its bound ATP, resulting in the formation of a stable complex. GrpE releases ADP from DnaK; ATP binding to DnaK triggers the release of the substrate protein, thus completing the reaction cycle. Several rounds of ATP-dependent interactions between DnaJ, DnaK and GrpE are required for fully efficient folding. The sequence is that of Protein GrpE from Baumannia cicadellinicola subsp. Homalodisca coagulata.